Consider the following 111-residue polypeptide: Ig kappa chain V-III region PC 7940 (111 aa).

A framework-1 region spans residues 1 to 23; the sequence is DIVLTQSPASLAVSLGQRATISC. Cys-23 and Cys-92 are joined by a disulfide. A complementarity-determining-1 region spans residues 24–38; it reads RASKSVSAFGYSYMH. The interval 39–53 is framework-2; sequence WYQQKPGQPPKLLIY. Residues 54 to 60 are complementarity-determining-2; it reads LASNLES. The interval 61 to 92 is framework-3; sequence GVPARFSGSGSGTDFTLNIHPVEEEDAVTYYC. A complementarity-determining-3 region spans residues 93–101; sequence QHSRELPPT. The tract at residues 102–111 is framework-4; it reads FGGGTKLEIK.

This Mus musculus (Mouse) protein is Ig kappa chain V-III region PC 7940.